The primary structure comprises 365 residues: Glucan endo-1,3-beta-glucosidase, basic vacuolar isoform (365 aa).

The signal sequence occupies residues 1 to 32 (MSTLHKHNTPQMAAITLLGLLLVASSIEIAGA). Glu-128 (proton donor) is an active-site residue. Glu-273 serves as the catalytic Nucleophile. Positions 349-365 (VSGSVETNATASLISEI) are cleaved as a propeptide — removed in mature form. N-linked (GlcNAc...) asparagine glycosylation occurs at Asn-356.

The protein belongs to the glycosyl hydrolase 17 family.

It localises to the vacuole. It carries out the reaction Hydrolysis of (1-&gt;3)-beta-D-glucosidic linkages in (1-&gt;3)-beta-D-glucans.. Functionally, implicated in the defense of plants against pathogens. The polypeptide is Glucan endo-1,3-beta-glucosidase, basic vacuolar isoform (GN2) (Nicotiana plumbaginifolia (Leadwort-leaved tobacco)).